A 426-amino-acid polypeptide reads, in one-letter code: Histidine--tRNA ligase (426 aa).

It belongs to the class-II aminoacyl-tRNA synthetase family. Homodimer.

It localises to the cytoplasm. It catalyses the reaction tRNA(His) + L-histidine + ATP = L-histidyl-tRNA(His) + AMP + diphosphate + H(+). In Microcystis aeruginosa (strain NIES-843 / IAM M-2473), this protein is Histidine--tRNA ligase.